Here is a 208-residue protein sequence, read N- to C-terminus: OVARIAN TUMOR DOMAIN-containing deubiquitinating enzyme 2 (208 aa).

Positions 5-127 constitute an OTU domain; the sequence is IVRRVIPSDN…GLHYDALALS (123 aa). Aspartate 13 is a catalytic residue. Cysteine 16 acts as the Nucleophile in catalysis. Active-site residues include histidine 120 and histidine 201.

It belongs to the peptidase C85 family.

It carries out the reaction Thiol-dependent hydrolysis of ester, thioester, amide, peptide and isopeptide bonds formed by the C-terminal Gly of ubiquitin (a 76-residue protein attached to proteins as an intracellular targeting signal).. Its function is as follows. Hydrolase that can remove conjugated ubiquitin from proteins in vitro and may therefore play an important regulatory role at the level of protein turnover by preventing degradation. Cysteine protease with a preference for 'Lys-63' and 'Lys-48' -linked ubiquitin (UB) tetramers as substrates. The protein is OVARIAN TUMOR DOMAIN-containing deubiquitinating enzyme 2 of Arabidopsis thaliana (Mouse-ear cress).